The sequence spans 448 residues: Adenylosuccinate synthetase (448 aa).

GTP contacts are provided by residues 22–28 and 50–52; these read GDEGKGK and GHT. Aspartate 23 serves as the catalytic Proton acceptor. 2 residues coordinate Mg(2+): aspartate 23 and glycine 50. Residues 23–26, 48–51, threonine 139, arginine 153, glutamine 234, threonine 249, and arginine 321 contribute to the IMP site; these read DEGK and NAGH. The active-site Proton donor is the histidine 51. Substrate is bound at residue 317-323; the sequence is SVTGRPR. GTP contacts are provided by residues arginine 323, 349–351, and 431–433; these read KLD and STG.

Belongs to the adenylosuccinate synthetase family. In terms of assembly, homodimer. Requires Mg(2+) as cofactor.

Its subcellular location is the cytoplasm. It catalyses the reaction IMP + L-aspartate + GTP = N(6)-(1,2-dicarboxyethyl)-AMP + GDP + phosphate + 2 H(+). Its pathway is purine metabolism; AMP biosynthesis via de novo pathway; AMP from IMP: step 1/2. Plays an important role in the de novo pathway of purine nucleotide biosynthesis. Catalyzes the first committed step in the biosynthesis of AMP from IMP. In Burkholderia pseudomallei (strain 1106a), this protein is Adenylosuccinate synthetase.